The following is a 485-amino-acid chain: MDVKAAPNGVATIEDRILRITGYYGYYPGYSSQKSTTRSSVTRCKPGPNCPSSHSSISRQLSPLSVTEDSSAPILELQSRGSSGVCGRRVERQSRSGDDGTQTRPESSSQENGLKARCLSCTSMVLKTIWGLLIILSVSSSWVGTTQIVKITYKNFYCPFFMTWFSTNWNIMFFPVYYSGHLATAQEKQSPIKKFRECSRIFGEDGLTLKLFLKRTAPFSILWTLTNYLYLLALKKLTATDVSALFCCNKAFVFLLSWIVLKDRFMGVRIVAAIMAITGIVMMAYADNFHADSIIGVAFAVGSASTSALYKVLFKMFLGSANFGEAAHFVSTLGFFNLIFISFTPIILYFTKVEHWSSFAALPWGCLCGMAGLWLAFNILVNVGVVLTYPILISIGTVLSVPGNAAVDLLKQEVIFNVVRLAATIIICIGFLLMLLPEEWDEITLRFINSLKEKKSEEHVEDLTDVSVHLRSRSRVNGTVSIPLA.

Polar residues-rich tracts occupy residues 32-42 (SQKSTTRSSVT) and 50-64 (CPSS…LSPL). 2 disordered regions span residues 32 to 64 (SQKS…LSPL) and 78 to 111 (QSRG…SSQE). Residues 88–98 (RRVERQSRSGD) are compositionally biased toward basic and acidic residues. Polar residues predominate over residues 99–111 (DGTQTRPESSSQE). The next 10 helical transmembrane spans lie at 129-149 (IWGL…TQIV), 156-176 (FYCP…FFPV), 217-234 (APFS…LLAL), 241-261 (DVSA…WIVL), 265-285 (FMGV…MMAY), 294-314 (IIGV…KVLF), 329-349 (FVST…IILY), 359-381 (FAAL…NILV), 383-405 (VGVV…PGNA), and 414-434 (VIFN…FLLM). The region spanning 225–285 (LTNYLYLLAL…AITGIVMMAY (61 aa)) is the EamA domain.

It belongs to the SLC35F solute transporter family.

It is found in the membrane. In terms of biological role, putative solute transporter. This Mus musculus (Mouse) protein is Solute carrier family 35 member F4 (Slc35f4).